The sequence spans 215 residues: Peptide methionine sulfoxide reductase MsrA (215 aa).

Cys-58 is a catalytic residue.

This sequence belongs to the MsrA Met sulfoxide reductase family.

The enzyme catalyses L-methionyl-[protein] + [thioredoxin]-disulfide + H2O = L-methionyl-(S)-S-oxide-[protein] + [thioredoxin]-dithiol. It carries out the reaction [thioredoxin]-disulfide + L-methionine + H2O = L-methionine (S)-S-oxide + [thioredoxin]-dithiol. Has an important function as a repair enzyme for proteins that have been inactivated by oxidation. Catalyzes the reversible oxidation-reduction of methionine sulfoxide in proteins to methionine. The polypeptide is Peptide methionine sulfoxide reductase MsrA (Pseudomonas savastanoi pv. phaseolicola (strain 1448A / Race 6) (Pseudomonas syringae pv. phaseolicola (strain 1448A / Race 6))).